Reading from the N-terminus, the 124-residue chain is Small ribosomal subunit protein uS13 (124 aa).

The interval 95–124 (GLPVRGQRTKTNARTRKGPKRTIAGKKKAR) is disordered.

Belongs to the universal ribosomal protein uS13 family. Part of the 30S ribosomal subunit. Forms a loose heterodimer with protein S19. Forms two bridges to the 50S subunit in the 70S ribosome.

Its function is as follows. Located at the top of the head of the 30S subunit, it contacts several helices of the 16S rRNA. In the 70S ribosome it contacts the 23S rRNA (bridge B1a) and protein L5 of the 50S subunit (bridge B1b), connecting the 2 subunits; these bridges are implicated in subunit movement. Contacts the tRNAs in the A and P-sites. The chain is Small ribosomal subunit protein uS13 from Mycobacterium sp. (strain JLS).